The sequence spans 555 residues: MSMFCFQCQEAARNKGCTVRGVCGKTGDVANLQDLLVYLLKGISIYAEKAKELGVVDRETGAFITRALFTTITNVNFDNKRFEEIIKEAFEVRDRIKNKFLKAYREKNGEEFDEKLPGMATWYSNDVSDFYAKGEEVGVLSTGDEDVRALRELLTYGLKGIAAYAEHAYILEEEDQEIYSFLQEGLVATTDNTLSADELTALVMKCGEVAVKTMALLDQANTSNYGHPEPTQVNLGVRNRPGILVSGHDLKDLEELLEQTEGKGVDVYTHGEMLPANAYPAFKKYDHFVGNYGNAWWQQKEEFEKFNGPILMTTNCLVPPKDSYRDRVYTTNVVGFSGVKHIRDRKPGEQKDFSPVIEHALKCDPPEELENGMIPVGFAHNAVMSVADKVVEAVKQGKIKRFVVMAGCDGRHRSRDYYTNVARNLPEDAVILTAGCAKYRYNKLNLGDIDGIPRILDAGQCNDSYSLVVIAQKLAEVFGVDDINELPISYDIAWYEQKAVAVLLALLYLGVKGIRLGPSLPAFLSPNVVKVLVDKFDIKPIGEVEEDVKAIMAGE.

The [4Fe-4S] cluster site is built by Cys5, Cys8, Cys17, and Cys23. 8 residues coordinate hybrid [4Fe-2O-2S] cluster: His248, Glu272, Cys316, Cys408, Cys436, Cys461, Glu496, and Lys498. Residue Cys408 is modified to Cysteine persulfide.

Belongs to the HCP family. Requires [4Fe-4S] cluster as cofactor. The cofactor is hybrid [4Fe-2O-2S] cluster.

The protein localises to the cytoplasm. The enzyme catalyses A + NH4(+) + H2O = hydroxylamine + AH2 + H(+). Functionally, catalyzes the reduction of hydroxylamine to form NH(3) and H(2)O. This chain is Hydroxylamine reductase, found in Halothermothrix orenii (strain H 168 / OCM 544 / DSM 9562).